Here is a 277-residue protein sequence, read N- to C-terminus: MAGEVEFKGKGQALRLGIQQELGGGPLSIFGAAAQKHDLSIREVTAGVLTKLAEDFPNLEFQLRTSLTKKAINEKLRSFDPRLGQALFVESASIRPDGGITEVKDRHGNWRVILVGESKHQGNDVEKILAGVLQGKAKDQDFMAAGNAIERMHKNVLELRNYMLDEKHFPYVVFLQGSNFATESFEVTRPDGRVVKIVHDSGMLNRIDRVTASSLSREINQNYCENIVVRAGSFDHMFQIASLYCKAAPWTAGEMAEAMLAVAKTSLRIIADDLDQN.

Belongs to the EcoRI type II restriction endonuclease family. In terms of assembly, homodimer. Mg(2+) serves as cofactor.

It carries out the reaction Endonucleolytic cleavage of DNA to give specific double-stranded fragments with terminal 5'-phosphates.. A P subtype restriction enzyme that recognizes the double-stranded sequence 5'-GAATTC-3' and cleaves after G-1. This Cereibacter sphaeroides (Rhodobacter sphaeroides) protein is Type II restriction enzyme RsrI (rsrIR).